The following is a 287-amino-acid chain: Isopentenyl-diphosphate Delta-isomerase I (287 aa).

The region spanning 105–257 (LLHRAFSVFL…GVKLSPWFRL (153 aa)) is the Nudix hydrolase domain. Active-site residues include cysteine 142 and tyrosine 207.

It belongs to the IPP isomerase type 1 family.

The enzyme catalyses isopentenyl diphosphate = dimethylallyl diphosphate. It participates in isoprenoid biosynthesis; dimethylallyl diphosphate biosynthesis; dimethylallyl diphosphate from isopentenyl diphosphate: step 1/1. Its pathway is porphyrin-containing compound metabolism; chlorophyll biosynthesis. Functionally, catalyzes the 1,3-allylic rearrangement of the homoallylic substrate isopentenyl (IPP) to its highly electrophilic allylic isomer, dimethylallyl diphosphate (DMAPP). This Clarkia breweri (Fairy fans) protein is Isopentenyl-diphosphate Delta-isomerase I (IPI1).